The sequence spans 1392 residues: ENHANCER OF AG-4 protein 2 (1392 aa).

The PWWP domain occupies 20–77 (LGDLVLAKVKGFPAWPAKISRPEDWDRAPDPKKYFVQFFGTEEIAFVAPPDIQAFTSE). A compositionally biased stretch (polar residues) spans 184–194 (ESKVKTTSPVS). Disordered regions lie at residues 184–354 (ESKV…STGT), 384–428 (KRQR…PAAQ), 575–613 (KKPQSDSCKEAVAGSDKISSSQSQPANQRHKSASVGERL), and 723–766 (QGHH…GGSL). Composition is skewed to basic and acidic residues over residues 196–215 (SLEHSSFDPKIKKEDFDKGT), 239–258 (KEAGGSDRKGEDTVHRDKSN), and 311–345 (LESEQGKLAPRVDESSRAAKKPRCESADNKVKCEI). The span at 391-400 (EHATSPSFSG) shows a compositional bias: polar residues. The segment covering 401–417 (SRDKSGKGHLEQKDRSS) has biased composition (basic and acidic residues). Polar residues-rich tracts occupy residues 591 to 601 (KISSSQSQPAN) and 725 to 744 (HHQQGSSPSNHGHQSLSRNQ). A CID domain is found at 771 to 912 (EAAISRDAFE…RYIDDIRASG (142 aa)). 3 disordered regions span residues 957–986 (FFSSHNFEDDEEDDDLPTSQKEKSTSAGER), 1014–1356 (LEME…NYQP), and 1369–1392 (PGHTAPQMLPSRPDIPTVNCWRPA). A compositionally biased stretch (pro residues) spans 1059 to 1129 (EDSPPLPQES…SPPPPPPPPS (71 aa)). The segment covering 1157–1175 (LSHQTYPGSMQQDRSSIFT) has biased composition (polar residues). Over residues 1215–1225 (SSREPSSFTSS) the composition is skewed to low complexity. Composition is skewed to polar residues over residues 1240–1255 (EASSQNHRFQPSTPLS) and 1265–1284 (APSSHFSYPSHIQSQSQHSY). Basic and acidic residues predominate over residues 1293-1306 (QRDDARRYRNEEPW). The span at 1311 to 1320 (SGHSAENQNG) shows a compositional bias: polar residues.

Expressed in the inflorescence meristem, floral primordia, inflorescence stem, and floral pedicels. Also detected in the shoot apical meristem, stems, leaves, embryos, and roots.

It is found in the nucleus. In terms of biological role, transcription factor that functions as a repressor of flowering by enhancing the expression of several genes that delay flowering including FLC, FLM/MAF1, MAF2 and SVP. Also acts in the floral homeotic AGAMOUS (AG) pathway, specifically by processing the AGAMOUS pre-mRNA. Functions in association with HUA1 and HEN4 in AG pre-mRNA processing. Involved in all three aspects of the AG functions, the specification of stamen and carpel identities, the control of floral determinacy, and the spatial restriction of AP1 expression. Acts as a transcription regulator that controls anthocyanin accumulation. In Arabidopsis thaliana (Mouse-ear cress), this protein is ENHANCER OF AG-4 protein 2.